A 214-amino-acid polypeptide reads, in one-letter code: Pyridoxine/pyridoxamine 5'-phosphate oxidase (214 aa).

Substrate contacts are provided by residues R8–Y11 and K66. FMN contacts are provided by residues R61–K66, F76–T77, R82, K83, and Q105. The substrate site is built by Y123, R127, and S131. Residues Q140–S141 and W184 each bind FMN. A substrate-binding site is contributed by R190–H192. R194 is an FMN binding site.

Belongs to the pyridoxamine 5'-phosphate oxidase family. Homodimer. Requires FMN as cofactor.

It catalyses the reaction pyridoxamine 5'-phosphate + O2 + H2O = pyridoxal 5'-phosphate + H2O2 + NH4(+). The enzyme catalyses pyridoxine 5'-phosphate + O2 = pyridoxal 5'-phosphate + H2O2. Its pathway is cofactor metabolism; pyridoxal 5'-phosphate salvage; pyridoxal 5'-phosphate from pyridoxamine 5'-phosphate: step 1/1. The protein operates within cofactor metabolism; pyridoxal 5'-phosphate salvage; pyridoxal 5'-phosphate from pyridoxine 5'-phosphate: step 1/1. In terms of biological role, catalyzes the oxidation of either pyridoxine 5'-phosphate (PNP) or pyridoxamine 5'-phosphate (PMP) into pyridoxal 5'-phosphate (PLP). In Burkholderia mallei (strain NCTC 10247), this protein is Pyridoxine/pyridoxamine 5'-phosphate oxidase.